The primary structure comprises 364 residues: tRNA/tmRNA (uracil-C(5))-methyltransferase (364 aa).

The S-adenosyl-L-methionine site is built by glutamine 188, tyrosine 216, asparagine 221, glutamate 237, and aspartate 297. Catalysis depends on cysteine 322, which acts as the Nucleophile. The Proton acceptor role is filled by glutamate 356.

It belongs to the class I-like SAM-binding methyltransferase superfamily. RNA M5U methyltransferase family. TrmA subfamily.

The enzyme catalyses uridine(54) in tRNA + S-adenosyl-L-methionine = 5-methyluridine(54) in tRNA + S-adenosyl-L-homocysteine + H(+). It catalyses the reaction uridine(341) in tmRNA + S-adenosyl-L-methionine = 5-methyluridine(341) in tmRNA + S-adenosyl-L-homocysteine + H(+). Its function is as follows. Dual-specificity methyltransferase that catalyzes the formation of 5-methyluridine at position 54 (m5U54) in all tRNAs, and that of position 341 (m5U341) in tmRNA (transfer-mRNA). The chain is tRNA/tmRNA (uracil-C(5))-methyltransferase from Teredinibacter turnerae (strain ATCC 39867 / T7901).